Consider the following 360-residue polypeptide: UPF0283 membrane protein Oant_2119 (360 aa).

The interval 1-30 (MTEKTPRKPASFTVSQASNRPEAADEAPRR) is disordered. 2 consecutive transmembrane segments (helical) span residues 77–97 (ILFG…TEDL) and 108–128 (LGWT…AIVV).

Belongs to the UPF0283 family.

The protein resides in the cell inner membrane. The polypeptide is UPF0283 membrane protein Oant_2119 (Brucella anthropi (strain ATCC 49188 / DSM 6882 / CCUG 24695 / JCM 21032 / LMG 3331 / NBRC 15819 / NCTC 12168 / Alc 37) (Ochrobactrum anthropi)).